The chain runs to 211 residues: Large ribosomal subunit protein uL3 (211 aa).

Residue Gln150 is modified to N5-methylglutamine.

Belongs to the universal ribosomal protein uL3 family. Part of the 50S ribosomal subunit. Forms a cluster with proteins L14 and L19. Methylated by PrmB.

In terms of biological role, one of the primary rRNA binding proteins, it binds directly near the 3'-end of the 23S rRNA, where it nucleates assembly of the 50S subunit. This chain is Large ribosomal subunit protein uL3, found in Pseudomonas entomophila (strain L48).